A 642-amino-acid chain; its full sequence is Frizzled-1 (642 aa).

The signal sequence occupies residues 1–68 (MAEEAAPSES…WLLEAPLLLG (68 aa)). Disordered regions lie at residues 26–45 (PGRR…RPRA) and 76–99 (QVSG…QYNG). The Extracellular portion of the chain corresponds to 69–317 (VRAQAAGQVS…PEELRFSRTW (249 aa)). An FZ domain is found at 106 to 225 (PDHGYCQPIS…HGAGELCVGQ (120 aa)). Cystine bridges form between cysteine 111–cysteine 172, cysteine 119–cysteine 165, cysteine 156–cysteine 193, cysteine 182–cysteine 222, and cysteine 186–cysteine 210. N-linked (GlcNAc...) asparagine glycosylation occurs at asparagine 125. An N-linked (GlcNAc...) asparagine glycan is attached at asparagine 226. The chain crosses the membrane as a helical span at residues 318-338 (IGIWSVLCCASTLFTVLTYLV). The Cytoplasmic segment spans residues 339-349 (DMRRFSYPERP). The helical transmembrane segment at 350 to 370 (IIFLSGCYTAVAVAYIAGFLL) threads the bilayer. At 371 to 397 (EDRVVCNDKFAEDGARTVAQGTKKEGC) the chain is on the extracellular side. Residues 398 to 418 (TILFMMLYFFSMASSIWWVIL) form a helical membrane-spanning segment. Over 419 to 440 (SLTWFLAAGMKWGHEAIEANSQ) the chain is Cytoplasmic. A helical membrane pass occupies residues 441-461 (YFHLAAWAVPAIKTITILALG). Over 462-484 (QVDGDVLSGVCFVGLNNVDALRG) the chain is Extracellular. The chain crosses the membrane as a helical span at residues 485–505 (FVLAPLFVYLFIGTSFLLAGF). Residues 506–531 (VSLFRIRTIMKHDGTKTEKLEKLMVR) lie on the Cytoplasmic side of the membrane. The chain crosses the membrane as a helical span at residues 532-552 (IGVFSVLYTVPATIVIACYFY). Over 553–593 (EQAFRDQWERSWVAQSCKSYAIPCPHLQGGGGVPPHPPMSP) the chain is Extracellular. Residues 594 to 614 (DFTVFMIKYLMTLIVGITSGF) traverse the membrane as a helical segment. The Cytoplasmic portion of the chain corresponds to 615 to 642 (WIWSGKTLNSWRKFYTRLTNSKQGETTV). The short motif at 620 to 625 (KTLNSW) is the Lys-Thr-X-X-X-Trp motif, mediates interaction with the PDZ domain of Dvl family members element. Positions 640–642 (TTV) match the PDZ-binding motif.

The protein belongs to the G-protein coupled receptor Fz/Smo family. Interacts with MYOC. Interacts with WNT7B. Post-translationally, ubiquitinated by ZNRF3, leading to its degradation by the proteasome. As to expression, expressed in chondrocytes.

Its subcellular location is the cell membrane. Receptor for Wnt proteins. Activated by WNT7B. Activated by WNT3A, WNT3, WNT1 and to a lesser extent WNT2, but apparently not by WNT4, WNT5A, WNT5B, WNT6, WNT7A or WNT7B. Contradictory results showing activation by WNT7B have been described for mouse. Functions in the canonical Wnt/beta-catenin signaling pathway. The canonical Wnt/beta-catenin signaling pathway leads to the activation of disheveled proteins, inhibition of GSK-3 kinase, nuclear accumulation of beta-catenin and activation of Wnt target genes. A second signaling pathway involving PKC and calcium fluxes has been seen for some family members, but it is not yet clear if it represents a distinct pathway or if it can be integrated in the canonical pathway, as PKC seems to be required for Wnt-mediated inactivation of GSK-3 kinase. Both pathways seem to involve interactions with G-proteins. May be involved in transduction and intercellular transmission of polarity information during tissue morphogenesis and/or in differentiated tissues. The protein is Frizzled-1 (Fzd1) of Mus musculus (Mouse).